The sequence spans 493 residues: MENLEQTCASLRAQIAATEAQLAGLKRELEIAEQAAEVKAQSTTRTITAEDGKTNETREWPLLSEEYKRYGRQMIVPQLGLQGQLKLRAARVLIVGAGGLGCPAALYLAGAGVGTLGLVDGDTVENSNLHRQVLHRSKNVGTFKVDSAIEYLRELNPHPTYVPYRAHLTPQEAPGIFKDYDIVLDCTDNPATRYLISDTAVLLGKPLVSASALRTEGQLMVLNYPPRPVGDKSGGPCYRCVFPKPPPANSVVSCADGGILGPVVGTMGVLQALEAIKVITSPAVNPSASPPSLLIFSAYSTPLFRTIRLRARRANCAVCSADASVTLETLKNGSTDYVFFCGVAGLEATLSPEERISPLEFKKRHPKEVPQDGGRINKEPTIIDVREKVQFDICSLENSINIPISTILSSASSPTNVDANAQPSLPFWLPRELASADSTDPIYVVCRHGNDSQIAVRRLKELGLDRGGQRYVGDIQGGLRAWREQIDPDWPEY.

ATP contacts are provided by residues G99, D120, 127–131 (SNLHR), K144, and 188–189 (DN). Residues C237 and C240 each contribute to the Zn(2+) site. Residue C254 is the Glycyl thioester intermediate; for adenylyltransferase activity of the active site. Zn(2+) contacts are provided by C316 and C319. Residues 376 to 491 (INKEPTIIDV…WREQIDPDWP (116 aa)) enclose the Rhodanese domain. Residue C446 is the Cysteine persulfide intermediate; for sulfurtransferase activity of the active site.

This sequence in the N-terminal section; belongs to the HesA/MoeB/ThiF family. UBA4 subfamily. The cofactor is Zn(2+).

The protein localises to the cytoplasm. It localises to the cytosol. The enzyme catalyses [molybdopterin-synthase sulfur-carrier protein]-C-terminal Gly-Gly + ATP + H(+) = [molybdopterin-synthase sulfur-carrier protein]-C-terminal Gly-Gly-AMP + diphosphate. It carries out the reaction [molybdopterin-synthase sulfur-carrier protein]-C-terminal Gly-Gly-AMP + S-sulfanyl-L-cysteinyl-[cysteine desulfurase] + AH2 = [molybdopterin-synthase sulfur-carrier protein]-C-terminal-Gly-aminoethanethioate + L-cysteinyl-[cysteine desulfurase] + A + AMP + 2 H(+). It participates in tRNA modification; 5-methoxycarbonylmethyl-2-thiouridine-tRNA biosynthesis. It functions in the pathway cofactor biosynthesis; molybdopterin biosynthesis. Functionally, plays a central role in 2-thiolation of mcm(5)S(2)U at tRNA wobble positions of cytosolic tRNA(Lys), tRNA(Glu) and tRNA(Gln). Also essential during biosynthesis of the molybdenum cofactor. Acts by mediating the C-terminal thiocarboxylation of sulfur carriers urm1 and mocs2a. Its N-terminus first activates urm1 and mocs2a as acyl-adenylates (-COAMP), then the persulfide sulfur on the catalytic cysteine is transferred to urm1 and mocs2a to form thiocarboxylation (-COSH) of their C-terminus. The reaction probably involves hydrogen sulfide that is generated from the persulfide intermediate and that acts as a nucleophile towards urm1 and mocs2a. Subsequently, a transient disulfide bond is formed. Does not use thiosulfate as sulfur donor; nfs1 probably acting as a sulfur donor for thiocarboxylation reactions. The protein is Adenylyltransferase and sulfurtransferase uba4 of Aspergillus fumigatus (strain ATCC MYA-4609 / CBS 101355 / FGSC A1100 / Af293) (Neosartorya fumigata).